The sequence spans 673 residues: DNA ligase (673 aa).

NAD(+)-binding positions include 34–38 (DAEYD), 83–84 (SL), and E116. K118 (N6-AMP-lysine intermediate) is an active-site residue. NAD(+) contacts are provided by R139, E176, K293, and K317. Zn(2+) is bound by residues C411, C414, C429, and C435. Positions 595-673 (NQQNPFFGKT…EDEFLKWVNS (79 aa)) constitute a BRCT domain.

Belongs to the NAD-dependent DNA ligase family. LigA subfamily. Mg(2+) serves as cofactor. Mn(2+) is required as a cofactor.

It catalyses the reaction NAD(+) + (deoxyribonucleotide)n-3'-hydroxyl + 5'-phospho-(deoxyribonucleotide)m = (deoxyribonucleotide)n+m + AMP + beta-nicotinamide D-nucleotide.. Functionally, DNA ligase that catalyzes the formation of phosphodiester linkages between 5'-phosphoryl and 3'-hydroxyl groups in double-stranded DNA using NAD as a coenzyme and as the energy source for the reaction. It is essential for DNA replication and repair of damaged DNA. The protein is DNA ligase of Legionella pneumophila (strain Paris).